The following is a 270-amino-acid chain: Phthiotriol/phenolphthiotriol dimycocerosates methyltransferase (270 aa).

This sequence belongs to the methyltransferase superfamily. Phthiotriol/phenolphthiotriol dimycocerosates methyltransferase family.

Functionally, catalyzes the methylation of the lipid moiety of the intermediate compounds phthiotriol and glycosylated phenolphthiotriol dimycoserosates to form phthiocerol dimycocerosates (DIM A) and glycosylated phenolphthiocerol dimycocerosates (PGL). The protein is Phthiotriol/phenolphthiotriol dimycocerosates methyltransferase of Mycobacterium leprae (strain TN).